A 438-amino-acid chain; its full sequence is UDP-N-acetylmuramoylalanine--D-glutamate ligase (438 aa).

115–121 (GSNGKST) provides a ligand contact to ATP.

It belongs to the MurCDEF family.

The protein resides in the cytoplasm. It catalyses the reaction UDP-N-acetyl-alpha-D-muramoyl-L-alanine + D-glutamate + ATP = UDP-N-acetyl-alpha-D-muramoyl-L-alanyl-D-glutamate + ADP + phosphate + H(+). The protein operates within cell wall biogenesis; peptidoglycan biosynthesis. Its function is as follows. Cell wall formation. Catalyzes the addition of glutamate to the nucleotide precursor UDP-N-acetylmuramoyl-L-alanine (UMA). This is UDP-N-acetylmuramoylalanine--D-glutamate ligase from Vibrio atlanticus (strain LGP32) (Vibrio splendidus (strain Mel32)).